The following is a 403-amino-acid chain: CCA-adding enzyme (403 aa).

ATP contacts are provided by Gly32 and Arg35. Gly32 and Arg35 together coordinate CTP. Residues Asp45 and Asp47 each contribute to the Mg(2+) site. ATP-binding residues include Arg116, Asp159, Arg162, Arg165, and Arg168. CTP contacts are provided by Arg116, Asp159, Arg162, Arg165, and Arg168.

This sequence belongs to the tRNA nucleotidyltransferase/poly(A) polymerase family. Bacterial CCA-adding enzyme type 3 subfamily. As to quaternary structure, homodimer. Requires Mg(2+) as cofactor.

It carries out the reaction a tRNA precursor + 2 CTP + ATP = a tRNA with a 3' CCA end + 3 diphosphate. It catalyses the reaction a tRNA with a 3' CCA end + 2 CTP + ATP = a tRNA with a 3' CCACCA end + 3 diphosphate. Its function is as follows. Catalyzes the addition and repair of the essential 3'-terminal CCA sequence in tRNAs without using a nucleic acid template. Adds these three nucleotides in the order of C, C, and A to the tRNA nucleotide-73, using CTP and ATP as substrates and producing inorganic pyrophosphate. tRNA 3'-terminal CCA addition is required both for tRNA processing and repair. Also involved in tRNA surveillance by mediating tandem CCA addition to generate a CCACCA at the 3' terminus of unstable tRNAs. While stable tRNAs receive only 3'-terminal CCA, unstable tRNAs are marked with CCACCA and rapidly degraded. This chain is CCA-adding enzyme, found in Limosilactobacillus reuteri (strain DSM 20016) (Lactobacillus reuteri).